We begin with the raw amino-acid sequence, 133 residues long: Oocytes ribonuclease (133 aa).

Residues 1–22 (MCAKSLLLVFGILLGLSHLSLS) form the signal peptide. Q23 carries the pyrrolidone carboxylic acid modification. H32 acts as the Proton acceptor in catalysis. 4 disulfide bridges follow: C41–C93, C56–C103, C74–C118, and C115–C132. 57–61 (KRVNT) serves as a coordination point for substrate. The Proton donor role is filled by H125.

This sequence belongs to the pancreatic ribonuclease family. As to quaternary structure, monomer.

The protein localises to the secreted. Functionally, preferentially cleaves single-stranded RNA at pyrimidine residues with a 3'flanking guanine. Hydrolyzes poly(U) and poly(C) as substrates, and prefers the former. The S-lectins in frog eggs may be involved in the fertilization and development of the frog embryo. This lectin agglutinates various animal cells, including normal lymphocytes, erythrocytes, and fibroblasts of animal and human origin. It is cytotoxic against several tumor cells. The chain is Oocytes ribonuclease (RCR) from Aquarana catesbeiana (American bullfrog).